The chain runs to 114 residues: Large ribosomal subunit protein uL22 (114 aa).

It belongs to the universal ribosomal protein uL22 family. Part of the 50S ribosomal subunit.

Functionally, this protein binds specifically to 23S rRNA; its binding is stimulated by other ribosomal proteins, e.g. L4, L17, and L20. It is important during the early stages of 50S assembly. It makes multiple contacts with different domains of the 23S rRNA in the assembled 50S subunit and ribosome. The globular domain of the protein is located near the polypeptide exit tunnel on the outside of the subunit, while an extended beta-hairpin is found that lines the wall of the exit tunnel in the center of the 70S ribosome. This chain is Large ribosomal subunit protein uL22, found in Aeromonas salmonicida (strain A449).